We begin with the raw amino-acid sequence, 544 residues long: CTP synthase (544 aa).

An amidoligase domain region spans residues 1 to 266 (MIRYIFITGG…DSEVLSHFGI (266 aa)). S13 contacts CTP. UTP is bound at residue S13. ATP contacts are provided by residues 14 to 19 (SLGKGI) and D71. Positions 71 and 140 each coordinate Mg(2+). CTP is bound by residues 147–149 (DIE), 187–192 (KTKPTQ), and K223. Residues 187–192 (KTKPTQ) and K223 each bind UTP. Position 239–241 (239–241 (RDV)) interacts with ATP. The Glutamine amidotransferase type-1 domain occupies 292-543 (TIGLVGKYTD…IAAAVKQSRL (252 aa)). G355 lines the L-glutamine pocket. Residue C382 is the Nucleophile; for glutamine hydrolysis of the active site. L-glutamine is bound by residues 383–386 (YGMQ), E406, and R471. Residues H516 and E518 contribute to the active site.

It belongs to the CTP synthase family. Homotetramer.

The enzyme catalyses UTP + L-glutamine + ATP + H2O = CTP + L-glutamate + ADP + phosphate + 2 H(+). It catalyses the reaction L-glutamine + H2O = L-glutamate + NH4(+). It carries out the reaction UTP + NH4(+) + ATP = CTP + ADP + phosphate + 2 H(+). It participates in pyrimidine metabolism; CTP biosynthesis via de novo pathway; CTP from UDP: step 2/2. With respect to regulation, allosterically activated by GTP, when glutamine is the substrate; GTP has no effect on the reaction when ammonia is the substrate. The allosteric effector GTP functions by stabilizing the protein conformation that binds the tetrahedral intermediate(s) formed during glutamine hydrolysis. Inhibited by the product CTP, via allosteric rather than competitive inhibition. In terms of biological role, catalyzes the ATP-dependent amination of UTP to CTP with either L-glutamine or ammonia as the source of nitrogen. Regulates intracellular CTP levels through interactions with the four ribonucleotide triphosphates. This Hyphomonas neptunium (strain ATCC 15444) protein is CTP synthase.